The primary structure comprises 225 residues: Protein-L-isoaspartate O-methyltransferase (225 aa).

Ser75 is an active-site residue.

It belongs to the methyltransferase superfamily. L-isoaspartyl/D-aspartyl protein methyltransferase family.

The protein localises to the cytoplasm. The catalysed reaction is [protein]-L-isoaspartate + S-adenosyl-L-methionine = [protein]-L-isoaspartate alpha-methyl ester + S-adenosyl-L-homocysteine. Functionally, catalyzes the methyl esterification of L-isoaspartyl residues in peptides and proteins that result from spontaneous decomposition of normal L-aspartyl and L-asparaginyl residues. It plays a role in the repair and/or degradation of damaged proteins. The sequence is that of Protein-L-isoaspartate O-methyltransferase from Xanthomonas axonopodis pv. citri (strain 306).